The chain runs to 629 residues: Arginine--tRNA ligase (629 aa).

The 'HIGH' region signature appears at 128–138 (VNPTKPLHMGH).

This sequence belongs to the class-I aminoacyl-tRNA synthetase family.

It is found in the cytoplasm. The enzyme catalyses tRNA(Arg) + L-arginine + ATP = L-arginyl-tRNA(Arg) + AMP + diphosphate. This Pyrococcus furiosus (strain ATCC 43587 / DSM 3638 / JCM 8422 / Vc1) protein is Arginine--tRNA ligase.